A 558-amino-acid polypeptide reads, in one-letter code: Dihydroxy-acid dehydratase (558 aa).

Asp-81 is a binding site for Mg(2+). Cys-122 provides a ligand contact to [2Fe-2S] cluster. Residues Asp-123 and Lys-124 each coordinate Mg(2+). Position 124 is an N6-carboxylysine (Lys-124). Residue Cys-195 participates in [2Fe-2S] cluster binding. Glu-447 is a binding site for Mg(2+). The Proton acceptor role is filled by Ser-473.

This sequence belongs to the IlvD/Edd family. Homodimer. [2Fe-2S] cluster serves as cofactor. Mg(2+) is required as a cofactor.

It carries out the reaction (2R)-2,3-dihydroxy-3-methylbutanoate = 3-methyl-2-oxobutanoate + H2O. The enzyme catalyses (2R,3R)-2,3-dihydroxy-3-methylpentanoate = (S)-3-methyl-2-oxopentanoate + H2O. It participates in amino-acid biosynthesis; L-isoleucine biosynthesis; L-isoleucine from 2-oxobutanoate: step 3/4. It functions in the pathway amino-acid biosynthesis; L-valine biosynthesis; L-valine from pyruvate: step 3/4. Functions in the biosynthesis of branched-chain amino acids. Catalyzes the dehydration of (2R,3R)-2,3-dihydroxy-3-methylpentanoate (2,3-dihydroxy-3-methylvalerate) into 2-oxo-3-methylpentanoate (2-oxo-3-methylvalerate) and of (2R)-2,3-dihydroxy-3-methylbutanoate (2,3-dihydroxyisovalerate) into 2-oxo-3-methylbutanoate (2-oxoisovalerate), the penultimate precursor to L-isoleucine and L-valine, respectively. This Bacillus pumilus (strain SAFR-032) protein is Dihydroxy-acid dehydratase.